The sequence spans 318 residues: Protein-methionine-sulfoxide reductase catalytic subunit MsrP (318 aa).

The segment at residues 1 to 40 (MNRFTRYDVTPEAIFNQRRQIIKAMGLGAAALSLPNIGFA) is a signal peptide (tat-type signal). Residues asparagine 72, 75–76 (YE), cysteine 130, threonine 165, asparagine 217, arginine 222, and 233–235 (SIK) contribute to the Mo-molybdopterin site.

The protein belongs to the MsrP family. As to quaternary structure, heterodimer of a catalytic subunit (MsrP) and a heme-binding subunit (MsrQ). Mo-molybdopterin serves as cofactor. Post-translationally, predicted to be exported by the Tat system. The position of the signal peptide cleavage has not been experimentally proven.

It is found in the periplasm. The catalysed reaction is L-methionyl-[protein] + a quinone + H2O = L-methionyl-(S)-S-oxide-[protein] + a quinol. The enzyme catalyses L-methionyl-[protein] + a quinone + H2O = L-methionyl-(R)-S-oxide-[protein] + a quinol. Part of the MsrPQ system that repairs oxidized periplasmic proteins containing methionine sulfoxide residues (Met-O), using respiratory chain electrons. Thus protects these proteins from oxidative-stress damage caused by reactive species of oxygen and chlorine generated by the host defense mechanisms. MsrPQ is essential for the maintenance of envelope integrity under bleach stress, rescuing a wide series of structurally unrelated periplasmic proteins from methionine oxidation. The catalytic subunit MsrP is non-stereospecific, being able to reduce both (R-) and (S-) diastereoisomers of methionine sulfoxide. The polypeptide is Protein-methionine-sulfoxide reductase catalytic subunit MsrP (Actinobacillus pleuropneumoniae serotype 5b (strain L20)).